Reading from the N-terminus, the 413-residue chain is Serine hydroxymethyltransferase (413 aa).

Residues Leu-119 and 123 to 125 (GHL) contribute to the (6S)-5,6,7,8-tetrahydrofolate site. Position 228 is an N6-(pyridoxal phosphate)lysine (Lys-228).

Belongs to the SHMT family. As to quaternary structure, homodimer. Requires pyridoxal 5'-phosphate as cofactor.

Its subcellular location is the cytoplasm. The catalysed reaction is (6R)-5,10-methylene-5,6,7,8-tetrahydrofolate + glycine + H2O = (6S)-5,6,7,8-tetrahydrofolate + L-serine. It participates in one-carbon metabolism; tetrahydrofolate interconversion. Its pathway is amino-acid biosynthesis; glycine biosynthesis; glycine from L-serine: step 1/1. Catalyzes the reversible interconversion of serine and glycine with tetrahydrofolate (THF) serving as the one-carbon carrier. This reaction serves as the major source of one-carbon groups required for the biosynthesis of purines, thymidylate, methionine, and other important biomolecules. Also exhibits THF-independent aldolase activity toward beta-hydroxyamino acids, producing glycine and aldehydes, via a retro-aldol mechanism. The chain is Serine hydroxymethyltransferase from Desulfatibacillum aliphaticivorans.